The sequence spans 494 residues: Transcriptional regulator of yeast form adherence 3 (494 aa).

The 360-residue stretch at 1 to 360 (MKFAKTLERT…SLGIQKTFPK (360 aa)) folds into the SPX domain. The RING-type zinc-finger motif lies at 398 to 437 (CPICMNIAYKPIRLSCGHLFCVRCLVKMKQDDKTSCPLCR).

The protein resides in the nucleus. Functionally, transcription factor required for yeast cell adherence to silicone substrate. This is Transcriptional regulator of yeast form adherence 3 (TRY3) from Candida albicans (strain SC5314 / ATCC MYA-2876) (Yeast).